The following is a 316-amino-acid chain: Transaldolase (316 aa).

The active-site Schiff-base intermediate with substrate is Lys-132.

It belongs to the transaldolase family. Type 1 subfamily. Homodimer.

The protein localises to the cytoplasm. The enzyme catalyses D-sedoheptulose 7-phosphate + D-glyceraldehyde 3-phosphate = D-erythrose 4-phosphate + beta-D-fructose 6-phosphate. Its pathway is carbohydrate degradation; pentose phosphate pathway; D-glyceraldehyde 3-phosphate and beta-D-fructose 6-phosphate from D-ribose 5-phosphate and D-xylulose 5-phosphate (non-oxidative stage): step 2/3. Functionally, transaldolase is important for the balance of metabolites in the pentose-phosphate pathway. This Aliivibrio salmonicida (strain LFI1238) (Vibrio salmonicida (strain LFI1238)) protein is Transaldolase.